The sequence spans 862 residues: DNA mismatch repair protein MutS (862 aa).

An ATP-binding site is contributed by 604 to 611 (GPNMAGKS).

The protein belongs to the DNA mismatch repair MutS family.

Its function is as follows. This protein is involved in the repair of mismatches in DNA. It is possible that it carries out the mismatch recognition step. This protein has a weak ATPase activity. This Brevibacillus brevis (strain 47 / JCM 6285 / NBRC 100599) protein is DNA mismatch repair protein MutS.